The sequence spans 119 residues: Large ribosomal subunit protein uL22 (119 aa).

It belongs to the universal ribosomal protein uL22 family. In terms of assembly, part of the 50S ribosomal subunit.

In terms of biological role, this protein binds specifically to 23S rRNA; its binding is stimulated by other ribosomal proteins, e.g. L4, L17, and L20. It is important during the early stages of 50S assembly. It makes multiple contacts with different domains of the 23S rRNA in the assembled 50S subunit and ribosome. Its function is as follows. The globular domain of the protein is located near the polypeptide exit tunnel on the outside of the subunit, while an extended beta-hairpin is found that lines the wall of the exit tunnel in the center of the 70S ribosome. The chain is Large ribosomal subunit protein uL22 from Rickettsia rickettsii (strain Iowa).